The following is a 628-amino-acid chain: Keratin, type II cytoskeletal 3 (628 aa).

Residues 1 to 21 (MSRQASKTSGGGSQGFSGRSA) form a disordered region. Residues 1-197 (MSRQASKTSG…DPQIGQVKAQ (197 aa)) are head. A phosphoserine mark is found at S13 and S56. The tract at residues 198 to 233 (EREQIKTLNNKFASFIDKVRFLEQQNKVLETKWNLL) is coil 1A. In terms of domain architecture, IF rod spans 198 to 513 (EREQIKTLNN…KLLEGEEYRM (316 aa)). Residues 234–254 (QQQGTSSISGTNNLEPLFENH) form a linker 1 region. The segment at 255–346 (INYLRSYLDN…TLYDAELSQM (92 aa)) is coil 1B. K296 is modified (N6,N6-dimethyllysine). Residues 347 to 370 (QSHISDTSVVLSMDNNRSLDLDSI) form a linker 12 region. S364 carries the phosphoserine modification. The interval 371 to 509 (IAEVRAQYED…ATYRKLLEGE (139 aa)) is coil 2. Residues 510–628 (EYRMSGECPS…SSQSSQRYSR (119 aa)) are tail. The tract at residues 605–628 (SSASNRGGSIKFSQSSQSSQRYSR) is disordered. Over residues 617 to 628 (SQSSQSSQRYSR) the composition is skewed to low complexity.

This sequence belongs to the intermediate filament family. In terms of assembly, heterotetramer of two type I and two type II keratins. Keratin-3 associates with keratin-12. As to expression, cornea specific.

This is Keratin, type II cytoskeletal 3 (KRT3) from Homo sapiens (Human).